We begin with the raw amino-acid sequence, 289 residues long: Pantothenate synthetase (289 aa).

28–35 (MGCLHEGH) is a binding site for ATP. Residue H35 is the Proton donor of the active site. Q59 serves as a coordination point for (R)-pantoate. Beta-alanine is bound at residue Q59. 147–150 (GLKD) lines the ATP pocket. Q153 is a (R)-pantoate binding site. Residues V176 and 184-187 (MSSR) each bind ATP.

This sequence belongs to the pantothenate synthetase family. In terms of assembly, homodimer.

Its subcellular location is the cytoplasm. It carries out the reaction (R)-pantoate + beta-alanine + ATP = (R)-pantothenate + AMP + diphosphate + H(+). It functions in the pathway cofactor biosynthesis; (R)-pantothenate biosynthesis; (R)-pantothenate from (R)-pantoate and beta-alanine: step 1/1. Functionally, catalyzes the condensation of pantoate with beta-alanine in an ATP-dependent reaction via a pantoyl-adenylate intermediate. The chain is Pantothenate synthetase from Magnetococcus marinus (strain ATCC BAA-1437 / JCM 17883 / MC-1).